The sequence spans 449 residues: Tubulin alpha-1C chain (449 aa).

Positions 1–4 match the MREC motif motif; it reads MREC. Glutamine 11 is a GTP binding site. Position 40 is an N6-acetyllysine (lysine 40). Residues glutamate 71, serine 140, glycine 144, threonine 145, threonine 179, asparagine 206, and asparagine 228 each contribute to the GTP site. Position 71 (glutamate 71) interacts with Mg(2+). Glutamate 254 is an active-site residue. Tyrosine 282 carries the 3'-nitrotyrosine modification. The segment at 429-449 is disordered; it reads EKDYEEVGADSADGEDEGEEY. Positions 431–449 are enriched in acidic residues; the sequence is DYEEVGADSADGEDEGEEY. Residue tyrosine 432 is modified to Phosphotyrosine. The residue at position 439 (serine 439) is a Phosphoserine. Residue tyrosine 449 is modified to 3'-nitrotyrosine.

This sequence belongs to the tubulin family. In terms of assembly, dimer of alpha and beta chains. A typical microtubule is a hollow water-filled tube with an outer diameter of 25 nm and an inner diameter of 15 nM. Alpha-beta heterodimers associate head-to-tail to form protofilaments running lengthwise along the microtubule wall with the beta-tubulin subunit facing the microtubule plus end conferring a structural polarity. Microtubules usually have 13 protofilaments but different protofilament numbers can be found in some organisms and specialized cells. Mg(2+) is required as a cofactor. In terms of processing, some glutamate residues at the C-terminus are polyglutamylated, resulting in polyglutamate chains on the gamma-carboxyl group. Polyglutamylation plays a key role in microtubule severing by spastin (SPAST). SPAST preferentially recognizes and acts on microtubules decorated with short polyglutamate tails: severing activity by SPAST increases as the number of glutamates per tubulin rises from one to eight, but decreases beyond this glutamylation threshold. Glutamylation is also involved in cilia motility. Post-translationally, some glutamate residues at the C-terminus are monoglycylated but not polyglycylated due to the absence of functional TTLL10 in human. Monoglycylation is mainly limited to tubulin incorporated into cilia and flagella axonemes, which is required for their stability and maintenance. Flagella glycylation controls sperm motility. Both polyglutamylation and monoglycylation can coexist on the same protein on adjacent residues, and lowering glycylation levels increases polyglutamylation, and reciprocally. Acetylation of alpha chains at Lys-40 is located inside the microtubule lumen. This modification has been correlated with increased microtubule stability, intracellular transport and ciliary assembly. In terms of processing, methylation of alpha chains at Lys-40 is found in mitotic microtubules and is required for normal mitosis and cytokinesis contributing to genomic stability. Post-translationally, nitration of Tyr-449 is irreversible and interferes with normal dynein intracellular distribution. Undergoes a tyrosination/detyrosination cycle, the cyclic removal and re-addition of a C-terminal tyrosine residue by the enzymes tubulin tyrosine carboxypeptidase (MATCAP1/KIAA0895L, VASH1 or VASH2) and tubulin tyrosine ligase (TTL), respectively. In terms of processing, tyrosination promotes microtubule interaction with CAP-Gly domain-containing proteins such as CLIP1, CLIP2 and DCTN1. Tyrosination regulates the initiation of dynein-dynactin motility via interaction with DCTN1, which brings the dynein-dynactin complex into contact with microtubules. In neurons, tyrosinated tubulins mediate the initiation of retrograde vesicle transport. Post-translationally, detyrosination is involved in metaphase plate congression by guiding chromosomes during mitosis: detyrosination promotes interaction with CENPE, promoting pole-proximal transport of chromosomes toward the equator. Detyrosination increases microtubules-dependent mechanotransduction in dystrophic cardiac and skeletal muscle. In cardiomyocytes, detyrosinated microtubules are required to resist to contractile compression during contraction: detyrosination promotes association with desmin (DES) at force-generating sarcomeres, leading to buckled microtubules and mechanical resistance to contraction.

It is found in the cytoplasm. The protein localises to the cytoskeleton. The catalysed reaction is GTP + H2O = GDP + phosphate + H(+). Functionally, tubulin is the major constituent of microtubules, a cylinder consisting of laterally associated linear protofilaments composed of alpha- and beta-tubulin heterodimers. Microtubules grow by the addition of GTP-tubulin dimers to the microtubule end, where a stabilizing cap forms. Below the cap, tubulin dimers are in GDP-bound state, owing to GTPase activity of alpha-tubulin. The polypeptide is Tubulin alpha-1C chain (TUBA1C) (Homo sapiens (Human)).